The following is a 380-amino-acid chain: Cytochrome b (380 aa).

The next 4 helical transmembrane spans lie at 34–54 (FGSL…LLAM), 78–99 (WLIR…YLHI), 114–134 (WNTG…GYVL), and 179–199 (FFAL…IHLT). Residues His84 and His98 each contribute to the heme b site. Positions 183 and 197 each coordinate heme b. His202 contributes to the a ubiquinone binding site. The next 4 helical transmembrane spans lie at 227 to 247 (LKDI…ALFS), 289 to 309 (LGGV…PFLH), 321 to 341 (LSQL…WVGS), and 348 to 368 (FIII…ILFP).

Belongs to the cytochrome b family. In terms of assembly, the cytochrome bc1 complex contains 11 subunits: 3 respiratory subunits (MT-CYB, CYC1 and UQCRFS1), 2 core proteins (UQCRC1 and UQCRC2) and 6 low-molecular weight proteins (UQCRH/QCR6, UQCRB/QCR7, UQCRQ/QCR8, UQCR10/QCR9, UQCR11/QCR10 and a cleavage product of UQCRFS1). This cytochrome bc1 complex then forms a dimer. Heme b serves as cofactor.

The protein localises to the mitochondrion inner membrane. Functionally, component of the ubiquinol-cytochrome c reductase complex (complex III or cytochrome b-c1 complex) that is part of the mitochondrial respiratory chain. The b-c1 complex mediates electron transfer from ubiquinol to cytochrome c. Contributes to the generation of a proton gradient across the mitochondrial membrane that is then used for ATP synthesis. The polypeptide is Cytochrome b (MT-CYB) (Calonectris leucomelas (Streaked shearwater)).